The chain runs to 188 residues: Pallidipin (188 aa).

The signal sequence occupies residues Met1–Ala18. Intrachain disulfides connect Cys21/Cys137, Cys55/Cys184, and Cys89/Cys105.

Belongs to the calycin superfamily. Triabin family. Expressed in salivary glands.

It localises to the secreted. Its function is as follows. Has been described as a specific inhibitor of collagen-induced platelet aggregation. However, as it does not affect platelet shape change or adhesion, it is plausible that it exerts its antiplatelet activity by a mechanism similar to that of triplatin, moubatin and dipetalodipin as scavenging eicosanoids involved in inflammation such as thromboxane A2 (TXA2). This is Pallidipin from Meccus pallidipennis (Triatomine bug).